Reading from the N-terminus, the 122-residue chain is Large ribosomal subunit protein bL12 (122 aa).

Belongs to the bacterial ribosomal protein bL12 family. In terms of assembly, homodimer. Part of the ribosomal stalk of the 50S ribosomal subunit. Forms a multimeric L10(L12)X complex, where L10 forms an elongated spine to which 2 to 4 L12 dimers bind in a sequential fashion. Binds GTP-bound translation factors.

Forms part of the ribosomal stalk which helps the ribosome interact with GTP-bound translation factors. Is thus essential for accurate translation. This is Large ribosomal subunit protein bL12 from Sodalis glossinidius (strain morsitans).